The sequence spans 542 residues: Chaperonin GroEL (542 aa).

Residues T29 to P32, K50, D86 to T90, G414, and D494 contribute to the ATP site.

It belongs to the chaperonin (HSP60) family. In terms of assembly, forms a cylinder of 14 subunits composed of two heptameric rings stacked back-to-back. Interacts with the co-chaperonin GroES.

It localises to the cytoplasm. The catalysed reaction is ATP + H2O + a folded polypeptide = ADP + phosphate + an unfolded polypeptide.. Functionally, together with its co-chaperonin GroES, plays an essential role in assisting protein folding. The GroEL-GroES system forms a nano-cage that allows encapsulation of the non-native substrate proteins and provides a physical environment optimized to promote and accelerate protein folding. The protein is Chaperonin GroEL of Cytophaga hutchinsonii (strain ATCC 33406 / DSM 1761 / CIP 103989 / NBRC 15051 / NCIMB 9469 / D465).